Reading from the N-terminus, the 352-residue chain is Transcription factor MYB51 (352 aa).

HTH myb-type domains are found at residues 10 to 62 and 63 to 117; these read ELGL…ANYL and RPDI…KKRL. 2 consecutive DNA-binding regions (H-T-H motif) follow at residues 38 to 62 and 90 to 113; these read WRTL…ANYL and WSAI…NTHI. 2 disordered regions span residues 128–157 and 198–219; these read KGIT…DLDN and GGPL…SVDS. Residues 203–219 are compositionally biased toward low complexity; the sequence is STSHTTNTTTTSVSVDS.

In terms of assembly, can form complexes with MYC2, MYC3 or MYC4. As to expression, expressed in vegetative parts of the plant, mainly in mature rosette leaves and in trichomes. Detected in roots, but not in mature flowers or siliques.

The protein localises to the nucleus. In terms of biological role, transcription factor positively regulating indolic glucosinolate biosynthetic pathway genes. The chain is Transcription factor MYB51 (MYB51) from Arabidopsis thaliana (Mouse-ear cress).